Consider the following 106-residue polypeptide: MKTLVSYDIVEDKVRRKVFEACKDYGLTNVQYSLFFGDMTHNRREELFQRLRRIIGRQEGKVLICPVCDKDLRLSKAIEVSAGMPEEAAEAAVSYPGRSRKKARAG.

Residue Asp-8 participates in Mg(2+) binding. The disordered stretch occupies residues 86 to 106 (EEAAEAAVSYPGRSRKKARAG).

It belongs to the CRISPR-associated endoribonuclease Cas2 protein family. As to quaternary structure, homodimer, forms a heterotetramer with a Cas1 homodimer. Mg(2+) is required as a cofactor.

In terms of biological role, CRISPR (clustered regularly interspaced short palindromic repeat), is an adaptive immune system that provides protection against mobile genetic elements (viruses, transposable elements and conjugative plasmids). CRISPR clusters contain sequences complementary to antecedent mobile elements and target invading nucleic acids. CRISPR clusters are transcribed and processed into CRISPR RNA (crRNA). Functions as a ssRNA-specific endoribonuclease. Involved in the integration of spacer DNA into the CRISPR cassette. The sequence is that of CRISPR-associated endoribonuclease Cas2 from Desulforudis audaxviator (strain MP104C).